The chain runs to 175 residues: Crossover junction endodeoxyribonuclease RuvC (175 aa).

Residues D16, E76, and D148 contribute to the active site. Positions 16, 76, and 148 each coordinate Mg(2+).

It belongs to the RuvC family. Homodimer which binds Holliday junction (HJ) DNA. The HJ becomes 2-fold symmetrical on binding to RuvC with unstacked arms; it has a different conformation from HJ DNA in complex with RuvA. In the full resolvosome a probable DNA-RuvA(4)-RuvB(12)-RuvC(2) complex forms which resolves the HJ. It depends on Mg(2+) as a cofactor.

Its subcellular location is the cytoplasm. The enzyme catalyses Endonucleolytic cleavage at a junction such as a reciprocal single-stranded crossover between two homologous DNA duplexes (Holliday junction).. The RuvA-RuvB-RuvC complex processes Holliday junction (HJ) DNA during genetic recombination and DNA repair. Endonuclease that resolves HJ intermediates. Cleaves cruciform DNA by making single-stranded nicks across the HJ at symmetrical positions within the homologous arms, yielding a 5'-phosphate and a 3'-hydroxyl group; requires a central core of homology in the junction. The consensus cleavage sequence is 5'-(A/T)TT(C/G)-3'. Cleavage occurs on the 3'-side of the TT dinucleotide at the point of strand exchange. HJ branch migration catalyzed by RuvA-RuvB allows RuvC to scan DNA until it finds its consensus sequence, where it cleaves and resolves the cruciform DNA. This chain is Crossover junction endodeoxyribonuclease RuvC, found in Bradyrhizobium sp. (strain BTAi1 / ATCC BAA-1182).